We begin with the raw amino-acid sequence, 677 residues long: DNA-directed RNA polymerase subunit beta' (677 aa).

Zn(2+) contacts are provided by Cys69, Cys71, Cys87, and Cys90. Positions 489, 491, and 493 each coordinate Mg(2+).

It belongs to the RNA polymerase beta' chain family. RpoC1 subfamily. In terms of assembly, in plastids the minimal PEP RNA polymerase catalytic core is composed of four subunits: alpha, beta, beta', and beta''. When a (nuclear-encoded) sigma factor is associated with the core the holoenzyme is formed, which can initiate transcription. Mg(2+) is required as a cofactor. The cofactor is Zn(2+).

The protein resides in the plastid. It localises to the chloroplast. The catalysed reaction is RNA(n) + a ribonucleoside 5'-triphosphate = RNA(n+1) + diphosphate. Functionally, DNA-dependent RNA polymerase catalyzes the transcription of DNA into RNA using the four ribonucleoside triphosphates as substrates. The protein is DNA-directed RNA polymerase subunit beta' of Daucus carota (Wild carrot).